The primary structure comprises 92 residues: Small ribosomal subunit protein uS19 (92 aa).

This sequence belongs to the universal ribosomal protein uS19 family.

In terms of biological role, protein S19 forms a complex with S13 that binds strongly to the 16S ribosomal RNA. The polypeptide is Small ribosomal subunit protein uS19 (Corynebacterium aurimucosum (strain ATCC 700975 / DSM 44827 / CIP 107346 / CN-1) (Corynebacterium nigricans)).